The sequence spans 351 residues: Cytochrome c biogenesis protein CcsA (351 aa).

8 helical membrane passes run 12 to 32, 37 to 57, 68 to 88, 97 to 117, 143 to 163, 259 to 279, 294 to 314, and 320 to 340; these read NISF…AAFP, LSIL…TLLG, ISNL…IHLI, LVGV…ALTL, MMLS…FLII, IIGL…VWAN, WALI…TKGW, and AILA…VNLL.

It belongs to the CcmF/CycK/Ccl1/NrfE/CcsA family. May interact with ccs1.

It localises to the cellular thylakoid membrane. Functionally, required during biogenesis of c-type cytochromes (cytochrome c6 and cytochrome f) at the step of heme attachment. In Trichodesmium erythraeum (strain IMS101), this protein is Cytochrome c biogenesis protein CcsA.